Reading from the N-terminus, the 208-residue chain is Phosphoheptose isomerase (208 aa).

In terms of domain architecture, SIS spans 38 to 200; it reads MAVTLAKGHK…LFENVLALQP (163 aa). 53-55 is a binding site for substrate; the sequence is NGG. Residues H62 and E66 each coordinate Zn(2+). Substrate is bound by residues E66, 95-96, 121-123, S126, and Q173; these read ND and STS. Zn(2+) contacts are provided by Q173 and H181.

This sequence belongs to the SIS family. GmhA subfamily. Homotetramer. Zn(2+) serves as cofactor.

Its subcellular location is the cytoplasm. The enzyme catalyses 2 D-sedoheptulose 7-phosphate = D-glycero-alpha-D-manno-heptose 7-phosphate + D-glycero-beta-D-manno-heptose 7-phosphate. The protein operates within carbohydrate biosynthesis; D-glycero-D-manno-heptose 7-phosphate biosynthesis; D-glycero-alpha-D-manno-heptose 7-phosphate and D-glycero-beta-D-manno-heptose 7-phosphate from sedoheptulose 7-phosphate: step 1/1. Its function is as follows. Catalyzes the isomerization of sedoheptulose 7-phosphate in D-glycero-D-manno-heptose 7-phosphate. The polypeptide is Phosphoheptose isomerase (Nitratidesulfovibrio vulgaris (strain ATCC 29579 / DSM 644 / CCUG 34227 / NCIMB 8303 / VKM B-1760 / Hildenborough) (Desulfovibrio vulgaris)).